Here is a 487-residue protein sequence, read N- to C-terminus: UDP-N-acetylmuramate--L-alanine ligase (487 aa).

122-128 is a binding site for ATP; the sequence is GTHGKTS.

The protein belongs to the MurCDEF family.

Its subcellular location is the cytoplasm. The enzyme catalyses UDP-N-acetyl-alpha-D-muramate + L-alanine + ATP = UDP-N-acetyl-alpha-D-muramoyl-L-alanine + ADP + phosphate + H(+). It participates in cell wall biogenesis; peptidoglycan biosynthesis. Its function is as follows. Cell wall formation. In Corynebacterium urealyticum (strain ATCC 43042 / DSM 7109), this protein is UDP-N-acetylmuramate--L-alanine ligase.